Reading from the N-terminus, the 84-residue chain is U4-theraphotoxin-Hhn1a (84 aa).

The N-terminal stretch at 1-22 (MKVTLIAILTCAAVLVLHTTAA) is a signal peptide. The propeptide occupies 23-47 (EELEESQLMEVGMPDTELAAVDGER). Intrachain disulfides connect cysteine 51–cysteine 65, cysteine 55–cysteine 76, and cysteine 70–cysteine 81.

The protein belongs to the neurotoxin 12 (Hwtx-2) family. 02 (Hwtx-2) subfamily. In terms of tissue distribution, expressed by the venom gland.

The protein resides in the secreted. Its function is as follows. Postsynaptic neurotoxin. The chain is U4-theraphotoxin-Hhn1a from Cyriopagopus hainanus (Chinese bird spider).